The following is a 236-amino-acid chain: Sorulation-regulated protein 2 (236 aa).

Positions 1-20 (MLGLYLSSLFFAFFMAQVFA) are cleaved as a signal peptide. 4 N-linked (GlcNAc...) asparagine glycosylation sites follow: Asn155, Asn160, Asn203, and Asn212. Asn212 carries GPI-anchor amidated asparagine lipidation. A propeptide spans 213 to 236 (SSSSLMPSMGILSFLFGLYLLLHP) (removed in mature form).

In terms of processing, the GPI-anchor is attached to the protein in the endoplasmic reticulum and serves to target the protein to the cell surface. There, the glucosamine-inositol phospholipid moiety is cleaved off and the GPI-modified mannoprotein is covalently attached via its lipidless GPI glycan remnant to the 1,6-beta-glucan of the outer cell wall layer. Post-translationally, N-glycosylated.

The protein resides in the spore wall. Its subcellular location is the secreted. It localises to the cell wall. The protein localises to the membrane. The sequence is that of Sorulation-regulated protein 2 from Saccharomyces cerevisiae (strain ATCC 204508 / S288c) (Baker's yeast).